A 398-amino-acid polypeptide reads, in one-letter code: Serine/threonine-protein kinase 32A (398 aa).

G2 carries N-myristoyl glycine lipidation. The region spanning 23 to 281 (FEILRAIGKG…LTDIQNFPYM (259 aa)) is the Protein kinase domain. ATP is bound by residues 29–37 (IGKGSFGKV) and K52. Catalysis depends on D146, which acts as the Proton acceptor. The tract at residues 379–398 (ALEQTKNNTEEEEDGQNNNL) is disordered. Over residues 388–398 (EEEEDGQNNNL) the composition is skewed to acidic residues.

This sequence belongs to the protein kinase superfamily. Ser/Thr protein kinase family. The cofactor is Mg(2+).

The protein localises to the cell membrane. The enzyme catalyses L-seryl-[protein] + ATP = O-phospho-L-seryl-[protein] + ADP + H(+). It carries out the reaction L-threonyl-[protein] + ATP = O-phospho-L-threonyl-[protein] + ADP + H(+). This Mus musculus (Mouse) protein is Serine/threonine-protein kinase 32A.